Consider the following 151-residue polypeptide: Large ribosomal subunit protein bL9 (151 aa).

It belongs to the bacterial ribosomal protein bL9 family.

Functionally, binds to the 23S rRNA. This is Large ribosomal subunit protein bL9 from Bordetella pertussis (strain Tohama I / ATCC BAA-589 / NCTC 13251).